The sequence spans 287 residues: Acetyl-coenzyme A carboxylase carboxyl transferase subunit beta (287 aa).

A CoA carboxyltransferase N-terminal domain is found at 33-287; the sequence is LFSKCPGCKH…TLLAFHGGQA (255 aa). Residues Cys37, Cys40, Cys55, and Cys58 each contribute to the Zn(2+) site. The C4-type zinc-finger motif lies at 37–58; sequence CPGCKHTIYQKDLGNDSVCPNC.

It belongs to the AccD/PCCB family. As to quaternary structure, acetyl-CoA carboxylase is a heterohexamer composed of biotin carboxyl carrier protein (AccB), biotin carboxylase (AccC) and two subunits each of ACCase subunit alpha (AccA) and ACCase subunit beta (AccD). It depends on Zn(2+) as a cofactor.

It is found in the cytoplasm. It catalyses the reaction N(6)-carboxybiotinyl-L-lysyl-[protein] + acetyl-CoA = N(6)-biotinyl-L-lysyl-[protein] + malonyl-CoA. It participates in lipid metabolism; malonyl-CoA biosynthesis; malonyl-CoA from acetyl-CoA: step 1/1. Functionally, component of the acetyl coenzyme A carboxylase (ACC) complex. Biotin carboxylase (BC) catalyzes the carboxylation of biotin on its carrier protein (BCCP) and then the CO(2) group is transferred by the transcarboxylase to acetyl-CoA to form malonyl-CoA. The chain is Acetyl-coenzyme A carboxylase carboxyl transferase subunit beta from Streptococcus sanguinis (strain SK36).